A 311-amino-acid polypeptide reads, in one-letter code: N-acetylmuramic acid 6-phosphate etherase (311 aa).

The region spanning 66 to 230 (VVEAFEADGR…TTAAMVRLGK (165 aa)) is the SIS domain. Residue E94 is the Proton donor of the active site. E125 is a catalytic residue.

This sequence belongs to the GCKR-like family. MurNAc-6-P etherase subfamily. Homodimer.

It catalyses the reaction N-acetyl-D-muramate 6-phosphate + H2O = N-acetyl-D-glucosamine 6-phosphate + (R)-lactate. It functions in the pathway amino-sugar metabolism; N-acetylmuramate degradation. Specifically catalyzes the cleavage of the D-lactyl ether substituent of MurNAc 6-phosphate, producing GlcNAc 6-phosphate and D-lactate. The protein is N-acetylmuramic acid 6-phosphate etherase of Salinibacter ruber (strain DSM 13855 / M31).